The following is a 480-amino-acid chain: MSYTPSSNDLIAISPMLILCGVALLSLVVQFLIPEEDEGKPLWVLSILGILVAMYALYHTTNSPGYGKFFGSQISISPLTVWLSAIYLIAGLITLLVAPPFLSQHKTLFPEFFPLMLFCLSGMMFLTSGYDLIVIFVGLEILSLSLYVMIGMARTSVSALESAMKYFLLGTFSSGFMLLGIAFLYGGSGTTNLDGALRGLSLKGYEANFSKLGLGLFFVGVSFKAALVPFHSWTPDVYEGAQTPITGFMASAGKASALGLVIILFNHIPMGEMGNVWKYLMGTIALISMTWGNIVALKQDNLKRMLAYSSISHAGYIVAGIACGAGLEALYYLFSYSLLNLAAFAIISYLEQGKHEVTVNGISHLSGEHPFTALALSLVFLSFAGFPPLIGFWTKLFLLQKMAESDLFFHRVLLFGAVANSCIAFYYYMKITIQSYMKQETGVVAGARDLPSLPTLGFLIFLLCVFFTAGWIFFQPGSLL.

The next 13 helical transmembrane spans lie at 13-33 (ISPMLILCGVALLSLVVQFLI), 41-61 (PLWVLSILGILVAMYALYHTT), 81-101 (VWLSAIYLIAGLITLLVAPPF), 107-127 (TLFPEFFPLMLFCLSGMMFLT), 132-152 (LIVIFVGLEILSLSLYVMIGM), 167-187 (FLLGTFSSGFMLLGIAFLYGG), 212-232 (LGLGLFFVGVSFKAALVPFHS), 245-265 (ITGFMASAGKASALGLVIILF), 276-296 (VWKYLMGTIALISMTWGNIVA), 314-334 (AGYIVAGIACGAGLEALYYLF), 373-393 (ALALSLVFLSFAGFPPLIGFW), 413-433 (LLFGAVANSCIAFYYYMKITI), and 454-474 (PTLGFLIFLLCVFFTAGWIFF).

It belongs to the complex I subunit 2 family. As to quaternary structure, NDH-1 is composed of 14 different subunits. Subunits NuoA, H, J, K, L, M, N constitute the membrane sector of the complex.

Its subcellular location is the cell inner membrane. The catalysed reaction is a quinone + NADH + 5 H(+)(in) = a quinol + NAD(+) + 4 H(+)(out). Its function is as follows. NDH-1 shuttles electrons from NADH, via FMN and iron-sulfur (Fe-S) centers, to quinones in the respiratory chain. The immediate electron acceptor for the enzyme in this species is believed to be ubiquinone. Couples the redox reaction to proton translocation (for every two electrons transferred, four hydrogen ions are translocated across the cytoplasmic membrane), and thus conserves the redox energy in a proton gradient. This chain is NADH-quinone oxidoreductase subunit N, found in Leptospira biflexa serovar Patoc (strain Patoc 1 / Ames).